The sequence spans 201 residues: Small ribosomal subunit protein uS4 (201 aa).

One can recognise an S4 RNA-binding domain in the interval 91–151 (SRLDNVVYRA…EKSRSMLWFE (61 aa)).

It belongs to the universal ribosomal protein uS4 family. In terms of assembly, part of the 30S ribosomal subunit. Contacts protein S5. The interaction surface between S4 and S5 is involved in control of translational fidelity.

Functionally, one of the primary rRNA binding proteins, it binds directly to 16S rRNA where it nucleates assembly of the body of the 30S subunit. Its function is as follows. With S5 and S12 plays an important role in translational accuracy. This is Small ribosomal subunit protein uS4 from Corynebacterium jeikeium (strain K411).